A 384-amino-acid polypeptide reads, in one-letter code: FAD-dependent urate hydroxylase (384 aa).

FAD-binding positions include G11, 30–31 (EA), S43, and V125. Substrate is bound by residues N178, R204, and 216 to 218 (YFF). FAD is bound by residues D285 and 295 to 299 (GQGGC).

Belongs to the FAD-dependent urate hydroxylase family. FAD serves as cofactor.

It catalyses the reaction urate + NADH + O2 + H(+) = 5-hydroxyisourate + NAD(+) + H2O. It functions in the pathway purine metabolism; urate degradation. In terms of biological role, catalyzes the hydroxylation of uric acid to 5-hydroxyisourate. In Klebsiella pneumoniae, this protein is FAD-dependent urate hydroxylase (hpxO).